Here is a 1154-residue protein sequence, read N- to C-terminus: Chromosome partition protein Smc (1154 aa).

Pro-32–Asn-39 lines the ATP pocket. Coiled coils occupy residues Val-170–Ala-215, Leu-282–Glu-505, and Ala-627–Glu-993.

This sequence belongs to the SMC family. As to quaternary structure, homodimer.

The protein localises to the cytoplasm. Its function is as follows. Required for chromosome condensation and partitioning. The chain is Chromosome partition protein Smc from Rhodopseudomonas palustris (strain ATCC BAA-98 / CGA009).